Consider the following 558-residue polypeptide: Serine palmitoyltransferase 1 (558 aa).

Residues 1–49 (MAHIPEVLPKSIPIPAFIVTTSSYLWYYFNLVLTQIPGGQFIVSYIKKS) are Lumenal-facing. A helical transmembrane segment spans residues 50-84 (HHDDPYRTTVEIGLILYGIIYYLSKPQQKKSLQAQ). The Cytoplasmic portion of the chain corresponds to 85-341 (KPNLSPQEID…GRGLSEHFNM (257 aa)). Position 121 is a phosphothreonine (T121). A helical transmembrane segment spans residues 342-371 (DRATAIDITVGSMATALGSTGGFVLGDSVM). The Lumenal segment spans residues 372-424 (CLHQRIGSNAYCFSACLPAYTVTSVSKVLKLMDSNNDAVQTLQKLSKSLHDSF). The chain crosses the membrane as a helical span at residues 425–457 (ASDDSLRSYVIVTSSPVSAVLHLQLTPAYRSRK). At 458–558 (FGYTCEQLFE…ILACCQESNK (101 aa)) the chain is on the cytoplasmic side.

It belongs to the class-II pyridoxal-phosphate-dependent aminotransferase family. LCB1 and LCB2 encode essential subunits of the enzyme and form a heterodimer. Component of the SPOTS complex, at least composed of LCB1/2 (LCB1 and/or LCB2), ORM1/2 (ORM1 and/or ORM2), SAC1 and TSC3. Interacts with LCB2 and TSC3. It depends on pyridoxal 5'-phosphate as a cofactor.

It localises to the cytoplasm. Its subcellular location is the endoplasmic reticulum membrane. The enzyme catalyses L-serine + hexadecanoyl-CoA + H(+) = 3-oxosphinganine + CO2 + CoA. It participates in lipid metabolism; sphingolipid metabolism. Its function is as follows. Component of serine palmitoyltransferase (SPT), which catalyzes the committed step in the synthesis of sphingolipids, the condensation of serine with palmitoyl CoA to form the long chain base 3-ketosphinganine. This chain is Serine palmitoyltransferase 1 (LCB1), found in Saccharomyces cerevisiae (strain ATCC 204508 / S288c) (Baker's yeast).